The sequence spans 131 residues: Profilin-3 (131 aa).

Residues C13 and C115 are joined by a disulfide bond. Residues 81–97 carry the Involved in PIP2 interaction motif; it reads AVIRGKKGSGGITIKKT. At T111 the chain carries Phosphothreonine.

Belongs to the profilin family. Occurs in many kinds of cells as a complex with monomeric actin in a 1:1 ratio. In terms of processing, phosphorylated by MAP kinases.

It localises to the cytoplasm. Its subcellular location is the cytoskeleton. Binds to actin and affects the structure of the cytoskeleton. At high concentrations, profilin prevents the polymerization of actin, whereas it enhances it at low concentrations. The chain is Profilin-3 from Olea europaea (Common olive).